We begin with the raw amino-acid sequence, 111 residues long: Nucleoid-associated protein CYB_2894 (111 aa).

The protein belongs to the YbaB/EbfC family. Homodimer.

The protein resides in the cytoplasm. It is found in the nucleoid. Binds to DNA and alters its conformation. May be involved in regulation of gene expression, nucleoid organization and DNA protection. This is Nucleoid-associated protein CYB_2894 from Synechococcus sp. (strain JA-2-3B'a(2-13)) (Cyanobacteria bacterium Yellowstone B-Prime).